The following is a 398-amino-acid chain: uncharacterized protein (398 aa).

2 helical membrane passes run 31–51 (VVFS…CLLF) and 56–76 (AFIT…FFGC).

It belongs to the chlamydial CPn_0129/CT_036/TC_0306 family.

The protein resides in the cell membrane. This is an uncharacterized protein from Chlamydia muridarum (strain MoPn / Nigg).